The following is a 451-amino-acid chain: Opioid growth factor receptor-like protein 1 (451 aa).

Disordered stretches follow at residues methionine 1 to proline 89 and glutamate 308 to glutamine 451. A compositionally biased stretch (low complexity) spans proline 43–alanine 66. The span at glycine 322–serine 341 shows a compositional bias: polar residues. Basic and acidic residues-rich tracts occupy residues threonine 362–serine 381 and alanine 389–asparagine 399. The segment covering asparagine 431–asparagine 443 has biased composition (low complexity).

Belongs to the opioid growth factor receptor family. As to expression, ubiquitous.

This is Opioid growth factor receptor-like protein 1 (OGFRL1) from Homo sapiens (Human).